The sequence spans 78 residues: Large ribosomal subunit protein bL28 (78 aa).

The interval 1-25 (MSRVCQVTGKRPAVGNNRSHARNAT) is disordered.

The protein belongs to the bacterial ribosomal protein bL28 family.

This is Large ribosomal subunit protein bL28 from Vibrio vulnificus (strain CMCP6).